We begin with the raw amino-acid sequence, 219 residues long: Large ribosomal subunit protein uL3 (219 aa).

The interval 140 to 163 is disordered; sequence SASHGAHRNHRKPGSIGASSTPSR.

The protein belongs to the universal ribosomal protein uL3 family. As to quaternary structure, part of the 50S ribosomal subunit. Forms a cluster with proteins L14 and L19.

Functionally, one of the primary rRNA binding proteins, it binds directly near the 3'-end of the 23S rRNA, where it nucleates assembly of the 50S subunit. This chain is Large ribosomal subunit protein uL3, found in Leifsonia xyli subsp. xyli (strain CTCB07).